A 461-amino-acid polypeptide reads, in one-letter code: MAVSLWQQCIGRLQDELSAQQFSMWIRPLQAEMDGDTLVLYAPNRFVLDWVRDKYINIINQFFTEQMGSNAPKLRFDIGSRPSARPVAPAPVAAKPVNRQTKAQVGTTSFNTQAEPIINPNHRSNINPTYQFDNFVEGKSNQLGKAAALQVSENPGGAYNPLFLYGGTGLGKTHLLHAVGNGIIKNNPNAKVVYMHSERFVQDMVKALQNNAIEEFKRYYRSVDALFIDDIQFFANKDRSQEEFFHTFNALLEGNHQIILTSDRYPKEIDGVEDRLKSRFGWGLTVAIEPPELETRVAILMRKAQESGINLPDEVAFFIAKRLRSNVRELEGALNRVIANANFTGRPITIDFVREALRDLLALQEKLVTIDNIQKTVAEYYKIKMADMLSKRRSRSVARPRQVAMALSKELTNQSLPEIGDAFGGRDHTTVLHACRKIAQLREESHDIKEDYANLIRTLSS.

The tract at residues 1 to 90 (MAVSLWQQCI…RPSARPVAPA (90 aa)) is domain I, interacts with DnaA modulators. Residues 91 to 124 (PVAAKPVNRQTKAQVGTTSFNTQAEPIINPNHRS) are domain II. The segment at 125 to 341 (NINPTYQFDN…GALNRVIANA (217 aa)) is domain III, AAA+ region. Positions 169, 171, 172, and 173 each coordinate ATP. Residues 342–461 (NFTGRPITID…YANLIRTLSS (120 aa)) form a domain IV, binds dsDNA region.

This sequence belongs to the DnaA family. As to quaternary structure, oligomerizes as a right-handed, spiral filament on DNA at oriC.

Its subcellular location is the cytoplasm. Plays an essential role in the initiation and regulation of chromosomal replication. ATP-DnaA binds to the origin of replication (oriC) to initiate formation of the DNA replication initiation complex once per cell cycle. Binds the DnaA box (a 9 base pair repeat at the origin) and separates the double-stranded (ds)DNA. Forms a right-handed helical filament on oriC DNA; dsDNA binds to the exterior of the filament while single-stranded (ss)DNA is stabiized in the filament's interior. The ATP-DnaA-oriC complex binds and stabilizes one strand of the AT-rich DNA unwinding element (DUE), permitting loading of DNA polymerase. After initiation quickly degrades to an ADP-DnaA complex that is not apt for DNA replication. Binds acidic phospholipids. This chain is Chromosomal replication initiator protein DnaA, found in Shewanella frigidimarina (strain NCIMB 400).